A 288-amino-acid chain; its full sequence is Putative N-terminal acetyltransferase 2 (288 aa).

The tract at residues 68 to 90 (TEEKSSQFDENKSKSNNGKKNEP) is disordered.

As to quaternary structure, heterooligomeric.

It localises to the cytoplasm. Functionally, maybe involved in N-terminal acetylation of proteins. N-acetylation plays a role in normal eukaryotic translation and processing, protect against proteolytic degradation and protein turnover. This chain is Putative N-terminal acetyltransferase 2 (NAT2), found in Saccharomyces cerevisiae (strain ATCC 204508 / S288c) (Baker's yeast).